The sequence spans 1594 residues: Calpain-D (1594 aa).

RanBP2-type zinc fingers lie at residues 1-35 (MGTI…VRKV) and 135-164 (LNRR…VSYL). Disordered stretches follow at residues 210–256 (EEQH…TAID), 371–400 (EPQQ…NPTQ), 420–459 (ASSS…SSSG), 524–543 (KKKQ…GSGE), and 554–606 (AGLG…RLSG). Basic residues predominate over residues 215-229 (HQLHSQHLHKRHLKG). Composition is skewed to polar residues over residues 246–255 (RRTQSLSTAI) and 371–385 (EPQQ…QLQR). Serine 250 carries the phosphoserine modification. The segment covering 438 to 459 (NSNSNSSGNSNIINNNSSSSSG) has biased composition (low complexity). The span at 528–541 (QIASESQTNNNTGS) shows a compositional bias: polar residues. The RanBP2-type 3 zinc finger occupies 643–673 (RSKMWICIKCSYAYNRLWLQTCEMCEAKAEQ). The segment at 684–703 (QQQQQQHHHHHLQQQQAEAP) is disordered. RanBP2-type zinc fingers lie at residues 704–733 (RDEP…SKLK) and 744–774 (RKGE…HRQP). Disordered stretches follow at residues 786–811 (RPDG…HQSG) and 860–884 (SLQQ…GSIV). Residues 860-871 (SLQQQRNSSSSG) are compositionally biased toward polar residues. The segment at 927–956 (STKKWQCPACTYDNCAASVVCDICSSPRGL) adopts a RanBP2-type 6 zinc-finger fold. The 308-residue stretch at 1014–1321 (LFVDDSFPPA…FDCIDICKVR (308 aa)) folds into the Calpain catalytic domain. Catalysis depends on residues cysteine 1079, histidine 1245, and asparagine 1265.

It belongs to the peptidase C2 family.

Its function is as follows. Has a role in eye development. Calcium-regulated non-lysosomal thiol-protease. The polypeptide is Calpain-D (sol) (Drosophila melanogaster (Fruit fly)).